A 430-amino-acid chain; its full sequence is Spermatogenic leucine zipper protein 1 (430 aa).

The segment at 1–25 (MASSAKSAEMPTISKTVNPTPDPHQ) is disordered. Residues 62 to 102 (EQQTAQKFNNLLKEIKDILKNMAGFEEKITEAKELFEETNI) are a coiled coil. Ser-107 carries the phosphoserine modification. Positions 166–177 (KINEMLSTNLPV) are helix-loop-helix motif. The segment at 178 to 244 (SLAPEKEDNE…NVQEETMKIR (67 aa)) is basic motif. Coiled-coil stretches lie at residues 214-269 (LEEK…KLIK) and 316-351 (SLQL…TLQE). At Ser-258 the chain carries Phosphoserine. The tract at residues 303–324 (LEEQVKKLSHDTYSLQLMAALL) is leucine-zipper.

As to quaternary structure, interacts with PPP1CC isoform gamma-2. In terms of processing, phosphorylated by MAPK1/ERK2 and MAPK3/ERK1. Specifically and strongly expressed in the testis. Expressed in several tumor cell lines.

It is found in the cytoplasm. The protein resides in the nucleus. Its function is as follows. Transcription factor that binds to the DNA sequence 5'-CANNTG-3'(E box) and the G-box motif. May play an important role in the regulation of cell proliferation and differentiation during spermatogenesis. The sequence is that of Spermatogenic leucine zipper protein 1 (SPZ1) from Homo sapiens (Human).